Here is a 103-residue protein sequence, read N- to C-terminus: Large ribosomal subunit protein bL21 (103 aa).

The protein belongs to the bacterial ribosomal protein bL21 family. As to quaternary structure, part of the 50S ribosomal subunit. Contacts protein L20.

In terms of biological role, this protein binds to 23S rRNA in the presence of protein L20. The sequence is that of Large ribosomal subunit protein bL21 from Mycobacterium leprae (strain Br4923).